The chain runs to 366 residues: Growth/differentiation factor 3 (366 aa).

Positions methionine 1–threonine 22 are cleaved as a signal peptide. The propeptide occupies serine 23 to arginine 252. N-linked (GlcNAc...) asparagine glycosylation is found at asparagine 113 and asparagine 308. Intrachain disulfides connect cysteine 266–cysteine 331, cysteine 295–cysteine 363, and cysteine 299–cysteine 365.

The protein belongs to the TGF-beta family. Homodimer. Heterodimer (Potential). But, in contrast to other members of this family, cannot be disulfide-linked. Post-translationally, synthesized as large precursor molecule that undergo proteolytic cleavage, releasing the pro-domain from the active, receptor binding, C-terminal region of the molecule. As to expression, primarily in adult bone marrow, spleen, thymus and adipose tissue.

Its subcellular location is the secreted. It localises to the cytoplasm. Its function is as follows. Growth factor involved in early embryonic development and adipose-tissue homeostasis. During embryogenesis controls formation of anterior visceral endoderm and mesoderm and the establishment of anterior-posterior identity through a receptor complex comprising the receptor ACVR1B and the coreceptor CRIPTO. Regulates adipose-tissue homeostasis and energy balance under nutrient overload in part by signaling through the receptor complex based on ACVR1C and CRIPTO. This chain is Growth/differentiation factor 3 (Gdf3), found in Mus musculus (Mouse).